A 219-amino-acid polypeptide reads, in one-letter code: Ribosomal RNA small subunit methyltransferase G (219 aa).

Residues G85, L90, 136–137 (VE), and R151 contribute to the S-adenosyl-L-methionine site.

This sequence belongs to the methyltransferase superfamily. RNA methyltransferase RsmG family.

The protein resides in the cytoplasm. It carries out the reaction guanosine(527) in 16S rRNA + S-adenosyl-L-methionine = N(7)-methylguanosine(527) in 16S rRNA + S-adenosyl-L-homocysteine. Its function is as follows. Specifically methylates the N7 position of guanine in position 527 of 16S rRNA. This chain is Ribosomal RNA small subunit methyltransferase G, found in Cellvibrio japonicus (strain Ueda107) (Pseudomonas fluorescens subsp. cellulosa).